The following is a 670-amino-acid chain: Nitrate import ATP-binding protein NrtC (670 aa).

In terms of domain architecture, ABC transporter spans 5 to 239 (IEIDHVDRIF…RPRHRLEVVN (235 aa)). Residue 42-49 (GHSGCGKS) coordinates ATP. The tract at residues 255–278 (NQQKRAKKVGAVSQFAEAMGGNGL) is linker. The tract at residues 279-670 (EKINLDLGFI…LIDQIDQVNQ (392 aa)) is nrtA-like.

Belongs to the ABC transporter superfamily. Nitrate/nitrite/cyanate uptake transporter (NitT) (TC 3.A.1.16) family. In terms of assembly, the complex is composed of two ATP-binding proteins (NrtC and NrtD), two transmembrane proteins (NrtB) and a solute-binding protein (NrtA).

It localises to the cell inner membrane. The enzyme catalyses nitrate(out) + ATP + H2O = nitrate(in) + ADP + phosphate + H(+). Its function is as follows. Part of the ABC transporter complex NrtABCD involved in nitrate uptake. The complex is probably also involved in nitrite transport. Probably responsible for energy coupling to the transport system. The protein is Nitrate import ATP-binding protein NrtC (nrtC) of Synechocystis sp. (strain ATCC 27184 / PCC 6803 / Kazusa).